Consider the following 250-residue polypeptide: LexA repressor (250 aa).

Over residues 1–21 (MTSQERGTRRGDTRGNVRDFP) the composition is skewed to basic and acidic residues. The interval 1-33 (MTSQERGTRRGDTRGNVRDFPDSPADASGLTQR) is disordered. The segment at residues 54 to 74 (VREIGEAVGLTSTSSVAHQLK) is a DNA-binding region (H-T-H motif). Catalysis depends on for autocatalytic cleavage activity residues Ser174 and Lys211.

It belongs to the peptidase S24 family. In terms of assembly, homodimer.

The enzyme catalyses Hydrolysis of Ala-|-Gly bond in repressor LexA.. Represses a number of genes involved in the response to DNA damage (SOS response), including recA and lexA. In the presence of single-stranded DNA, RecA interacts with LexA causing an autocatalytic cleavage which disrupts the DNA-binding part of LexA, leading to derepression of the SOS regulon and eventually DNA repair. The protein is LexA repressor of Parafrankia sp. (strain EAN1pec).